A 189-amino-acid polypeptide reads, in one-letter code: Protein GrpE (189 aa).

Residues 1–21 (MADEQNLDNQNPETPEQSQAD) form a disordered region. The segment covering 7 to 20 (LDNQNPETPEQSQA) has biased composition (polar residues).

This sequence belongs to the GrpE family. In terms of assembly, homodimer.

The protein localises to the cytoplasm. Participates actively in the response to hyperosmotic and heat shock by preventing the aggregation of stress-denatured proteins, in association with DnaK and GrpE. It is the nucleotide exchange factor for DnaK and may function as a thermosensor. Unfolded proteins bind initially to DnaJ; upon interaction with the DnaJ-bound protein, DnaK hydrolyzes its bound ATP, resulting in the formation of a stable complex. GrpE releases ADP from DnaK; ATP binding to DnaK triggers the release of the substrate protein, thus completing the reaction cycle. Several rounds of ATP-dependent interactions between DnaJ, DnaK and GrpE are required for fully efficient folding. This chain is Protein GrpE, found in Stutzerimonas stutzeri (strain A1501) (Pseudomonas stutzeri).